A 735-amino-acid polypeptide reads, in one-letter code: Photosystem I P700 chlorophyll a apoprotein A2 (735 aa).

The next 8 helical transmembrane spans lie at 46-69 (IFAS…FHVA), 135-158 (LYTG…LHLQ), 175-199 (LNHH…HVAI), 274-292 (IAHH…GHMY), 331-354 (IHFQ…QHMY), 370-396 (AALY…IFFI), 418-440 (AIIS…PYVH), and 518-536 (FLVH…LILV). Cys560 and Cys569 together coordinate [4Fe-4S] cluster. Helical transmembrane passes span 576–597 (AFYL…YWHW) and 644–666 (LSVW…MFLI). Residues His655, Met663, and Tyr671 each contribute to the chlorophyll a site. Phylloquinone is bound at residue Trp672. Residues 708 to 728 (LVGLAHFSVGYIFTYAAFLIA) traverse the membrane as a helical segment.

Belongs to the PsaA/PsaB family. As to quaternary structure, the PsaA/B heterodimer binds the P700 chlorophyll special pair and subsequent electron acceptors. PSI consists of a core antenna complex that captures photons, and an electron transfer chain that converts photonic excitation into a charge separation. The eukaryotic PSI reaction center is composed of at least 11 subunits. Requires P700 is a chlorophyll a/chlorophyll a' dimer, A0 is one or more chlorophyll a, A1 is one or both phylloquinones and FX is a shared 4Fe-4S iron-sulfur center. as cofactor.

It localises to the plastid. It is found in the chloroplast thylakoid membrane. It carries out the reaction reduced [plastocyanin] + hnu + oxidized [2Fe-2S]-[ferredoxin] = oxidized [plastocyanin] + reduced [2Fe-2S]-[ferredoxin]. Its function is as follows. PsaA and PsaB bind P700, the primary electron donor of photosystem I (PSI), as well as the electron acceptors A0, A1 and FX. PSI is a plastocyanin-ferredoxin oxidoreductase, converting photonic excitation into a charge separation, which transfers an electron from the donor P700 chlorophyll pair to the spectroscopically characterized acceptors A0, A1, FX, FA and FB in turn. Oxidized P700 is reduced on the lumenal side of the thylakoid membrane by plastocyanin. The sequence is that of Photosystem I P700 chlorophyll a apoprotein A2 from Zea mays (Maize).